Reading from the N-terminus, the 667-residue chain is DNA ligase (667 aa).

NAD(+)-binding positions include aspartate 30 to aspartate 34, serine 79 to leucine 80, and glutamate 112. Residue lysine 114 is the N6-AMP-lysine intermediate of the active site. Residues arginine 135, glutamate 172, lysine 289, and lysine 313 each contribute to the NAD(+) site. Cysteine 407, cysteine 410, cysteine 425, and cysteine 431 together coordinate Zn(2+). A BRCT domain is found at valine 590 to alanine 667.

This sequence belongs to the NAD-dependent DNA ligase family. LigA subfamily. It depends on Mg(2+) as a cofactor. Mn(2+) is required as a cofactor.

The enzyme catalyses NAD(+) + (deoxyribonucleotide)n-3'-hydroxyl + 5'-phospho-(deoxyribonucleotide)m = (deoxyribonucleotide)n+m + AMP + beta-nicotinamide D-nucleotide.. In terms of biological role, DNA ligase that catalyzes the formation of phosphodiester linkages between 5'-phosphoryl and 3'-hydroxyl groups in double-stranded DNA using NAD as a coenzyme and as the energy source for the reaction. It is essential for DNA replication and repair of damaged DNA. This Histophilus somni (strain 2336) (Haemophilus somnus) protein is DNA ligase.